The following is a 426-amino-acid chain: Serine--tRNA ligase (426 aa).

233-235 (TAE) lines the L-serine pocket. An ATP-binding site is contributed by 264 to 266 (RRE). Glu-287 is an L-serine binding site. Residue 351–354 (EISS) coordinates ATP. Ser-386 provides a ligand contact to L-serine.

This sequence belongs to the class-II aminoacyl-tRNA synthetase family. Type-1 seryl-tRNA synthetase subfamily. As to quaternary structure, homodimer. The tRNA molecule binds across the dimer.

The protein localises to the cytoplasm. It carries out the reaction tRNA(Ser) + L-serine + ATP = L-seryl-tRNA(Ser) + AMP + diphosphate + H(+). It catalyses the reaction tRNA(Sec) + L-serine + ATP = L-seryl-tRNA(Sec) + AMP + diphosphate + H(+). It participates in aminoacyl-tRNA biosynthesis; selenocysteinyl-tRNA(Sec) biosynthesis; L-seryl-tRNA(Sec) from L-serine and tRNA(Sec): step 1/1. Its function is as follows. Catalyzes the attachment of serine to tRNA(Ser). Is also able to aminoacylate tRNA(Sec) with serine, to form the misacylated tRNA L-seryl-tRNA(Sec), which will be further converted into selenocysteinyl-tRNA(Sec). In Thermosipho africanus (strain TCF52B), this protein is Serine--tRNA ligase.